The sequence spans 145 residues: 3-hydroxyacyl-[acyl-carrier-protein] dehydratase FabZ (145 aa).

The active site involves His-48.

Belongs to the thioester dehydratase family. FabZ subfamily.

Its subcellular location is the cytoplasm. The enzyme catalyses a (3R)-hydroxyacyl-[ACP] = a (2E)-enoyl-[ACP] + H2O. Its function is as follows. Involved in unsaturated fatty acids biosynthesis. Catalyzes the dehydration of short chain beta-hydroxyacyl-ACPs and long chain saturated and unsaturated beta-hydroxyacyl-ACPs. In Geobacillus sp. (strain WCH70), this protein is 3-hydroxyacyl-[acyl-carrier-protein] dehydratase FabZ.